A 231-amino-acid polypeptide reads, in one-letter code: Cytochrome c oxidase subunit 2 (231 aa).

The Mitochondrial intermembrane portion of the chain corresponds to 1–14 (MAHPAQLGLQNATS). A helical transmembrane segment spans residues 15–45 (PIMEELIAFHDHALMIIFLISSLVLYVISLM). Topologically, residues 46 to 59 (LTTKLTHTSTMNAQ) are mitochondrial matrix. A helical transmembrane segment spans residues 60-87 (EIEMIWTILPAIILIMIALPSLRILYMT). Residues 88–231 (DEFNKPYLTL…WASYLYIVSL (144 aa)) lie on the Mitochondrial intermembrane side of the membrane. The Cu cation site is built by His161, Cys196, Glu198, Cys200, His204, and Met207. Glu198 is a Mg(2+) binding site.

This sequence belongs to the cytochrome c oxidase subunit 2 family. Component of the cytochrome c oxidase (complex IV, CIV), a multisubunit enzyme composed of 14 subunits. The complex is composed of a catalytic core of 3 subunits MT-CO1, MT-CO2 and MT-CO3, encoded in the mitochondrial DNA, and 11 supernumerary subunits COX4I, COX5A, COX5B, COX6A, COX6B, COX6C, COX7A, COX7B, COX7C, COX8 and NDUFA4, which are encoded in the nuclear genome. The complex exists as a monomer or a dimer and forms supercomplexes (SCs) in the inner mitochondrial membrane with NADH-ubiquinone oxidoreductase (complex I, CI) and ubiquinol-cytochrome c oxidoreductase (cytochrome b-c1 complex, complex III, CIII), resulting in different assemblies (supercomplex SCI(1)III(2)IV(1) and megacomplex MCI(2)III(2)IV(2)). Found in a complex with TMEM177, COA6, COX18, COX20, SCO1 and SCO2. Interacts with TMEM177 in a COX20-dependent manner. Interacts with COX20. Interacts with COX16. The cofactor is Cu cation.

Its subcellular location is the mitochondrion inner membrane. It catalyses the reaction 4 Fe(II)-[cytochrome c] + O2 + 8 H(+)(in) = 4 Fe(III)-[cytochrome c] + 2 H2O + 4 H(+)(out). Its function is as follows. Component of the cytochrome c oxidase, the last enzyme in the mitochondrial electron transport chain which drives oxidative phosphorylation. The respiratory chain contains 3 multisubunit complexes succinate dehydrogenase (complex II, CII), ubiquinol-cytochrome c oxidoreductase (cytochrome b-c1 complex, complex III, CIII) and cytochrome c oxidase (complex IV, CIV), that cooperate to transfer electrons derived from NADH and succinate to molecular oxygen, creating an electrochemical gradient over the inner membrane that drives transmembrane transport and the ATP synthase. Cytochrome c oxidase is the component of the respiratory chain that catalyzes the reduction of oxygen to water. Electrons originating from reduced cytochrome c in the intermembrane space (IMS) are transferred via the dinuclear copper A center (CU(A)) of subunit 2 and heme A of subunit 1 to the active site in subunit 1, a binuclear center (BNC) formed by heme A3 and copper B (CU(B)). The BNC reduces molecular oxygen to 2 water molecules using 4 electrons from cytochrome c in the IMS and 4 protons from the mitochondrial matrix. The polypeptide is Cytochrome c oxidase subunit 2 (MT-CO2) (Alouatta palliata (Mantled howler monkey)).